Reading from the N-terminus, the 732-residue chain is Wall-associated receptor kinase 2 (732 aa).

The N-terminal stretch at 1–23 is a signal peptide; sequence MKVQEGLFVVAVFYLAYTQLVKG. Residues 24-329 lie on the Extracellular side of the membrane; the sequence is QPRKECQTRC…RKVRPEYFRW (306 aa). N-linked (GlcNAc...) asparagine glycosylation is found at N57, N75, N111, N154, N217, and N246. The region spanning 230–277 is the EGF-like 1 domain; sequence GDKTCKQVEYRGVCGGNSTCFDSTGGTGYNCKCLEGFEGNPYLPNGCQ. 6 cysteine pairs are disulfide-bonded: C234–C249, C243–C260, C262–C276, C282–C295, C289–C304, and C306–C318. Residues 278 to 319 enclose the EGF-like 2; calcium-binding domain; that stretch reads DINECISSRHNCSEHSTCENTKGSFNCNCPSGYRKDSLNSCT. N288 carries an N-linked (GlcNAc...) asparagine glycan. Residues 330–350 form a helical membrane-spanning segment; sequence TQIFLGTTIGFSVIMLGISCL. At 351–732 the chain is on the cytoplasmic side; that stretch reads QQKIKHRKNT…VTTLDIEAGR (382 aa). T393 carries the post-translational modification Phosphothreonine. A Protein kinase domain is found at 404 to 677; sequence YHESRILGQG…KEVAAELEAL (274 aa). Residues 410–418 and K432 contribute to the ATP site; that span reads LGQGGQGTV. Position 477 is a phosphotyrosine (Y477). Catalysis depends on D529, which acts as the Proton acceptor. Residues T563 and T568 each carry the phosphothreonine modification. Y576 carries the phosphotyrosine modification.

Belongs to the protein kinase superfamily. Ser/Thr protein kinase family. Predominantly expressed in green tissues such as stems and leaves. Detected at organ junctions.

It localises to the membrane. It carries out the reaction L-seryl-[protein] + ATP = O-phospho-L-seryl-[protein] + ADP + H(+). The catalysed reaction is L-threonyl-[protein] + ATP = O-phospho-L-threonyl-[protein] + ADP + H(+). In terms of biological role, serine/threonine-protein kinase that may function as a signaling receptor of extracellular matrix component. Binding to pectin may have significance in the control of cell expansion, morphogenesis and development. The sequence is that of Wall-associated receptor kinase 2 (WAK2) from Arabidopsis thaliana (Mouse-ear cress).